A 119-amino-acid polypeptide reads, in one-letter code: NAD(P)H-quinone oxidoreductase subunit M (119 aa).

This sequence belongs to the complex I NdhM subunit family. NDH-1 can be composed of about 15 different subunits; different subcomplexes with different compositions have been identified which probably have different functions.

It localises to the cellular thylakoid membrane. The catalysed reaction is a plastoquinone + NADH + (n+1) H(+)(in) = a plastoquinol + NAD(+) + n H(+)(out). It carries out the reaction a plastoquinone + NADPH + (n+1) H(+)(in) = a plastoquinol + NADP(+) + n H(+)(out). In terms of biological role, NDH-1 shuttles electrons from an unknown electron donor, via FMN and iron-sulfur (Fe-S) centers, to quinones in the respiratory and/or the photosynthetic chain. The immediate electron acceptor for the enzyme in this species is believed to be plastoquinone. Couples the redox reaction to proton translocation, and thus conserves the redox energy in a proton gradient. Cyanobacterial NDH-1 also plays a role in inorganic carbon-concentration. This chain is NAD(P)H-quinone oxidoreductase subunit M, found in Gloeothece citriformis (strain PCC 7424) (Cyanothece sp. (strain PCC 7424)).